The primary structure comprises 176 residues: Transcription factor E (176 aa).

One can recognise an HTH TFE/IIEalpha-type domain in the interval 8-90 (EDPVIQKYLH…LWTFQYEKIP (83 aa)).

The protein belongs to the TFE family. Monomer. Interaction with RNA polymerase subunits RpoF and RpoE is necessary for Tfe stimulatory transcription activity. Able to interact with Tbp and RNA polymerase in the absence of DNA promoter. Interacts both with the preinitiation and elongation complexes.

Its function is as follows. Transcription factor that plays a role in the activation of archaeal genes transcribed by RNA polymerase. Facilitates transcription initiation by enhancing TATA-box recognition by TATA-box-binding protein (Tbp), and transcription factor B (Tfb) and RNA polymerase recruitment. Not absolutely required for transcription in vitro, but particularly important in cases where Tbp or Tfb function is not optimal. It dynamically alters the nucleic acid-binding properties of RNA polymerases by stabilizing the initiation complex and destabilizing elongation complexes. Seems to translocate with the RNA polymerase following initiation and acts by binding to the non template strand of the transcription bubble in elongation complexes. The sequence is that of Transcription factor E from Haloarcula marismortui (strain ATCC 43049 / DSM 3752 / JCM 8966 / VKM B-1809) (Halobacterium marismortui).